Here is an 86-residue protein sequence, read N- to C-terminus: MSVDTQKVIEDNKRSAQDTGSPEVQVALLTARIELLTGHFKTHKKDHHSRRGLLQMVNRRRSLLDYLKKKDNERYKSLIEKLGLRR.

The disordered stretch occupies residues 1-22 (MSVDTQKVIEDNKRSAQDTGSP). Over residues 7–16 (KVIEDNKRSA) the composition is skewed to basic and acidic residues.

Belongs to the universal ribosomal protein uS15 family. As to quaternary structure, part of the 30S ribosomal subunit. Forms a bridge to the 50S subunit in the 70S ribosome, contacting the 23S rRNA.

One of the primary rRNA binding proteins, it binds directly to 16S rRNA where it helps nucleate assembly of the platform of the 30S subunit by binding and bridging several RNA helices of the 16S rRNA. In terms of biological role, forms an intersubunit bridge (bridge B4) with the 23S rRNA of the 50S subunit in the ribosome. The protein is Small ribosomal subunit protein uS15 of Xanthomonas axonopodis pv. citri (strain 306).